The primary structure comprises 289 residues: Light-independent protochlorophyllide reductase iron-sulfur ATP-binding protein (289 aa).

Residues 10–15 and K39 each bind ATP; that span reads GIGKST. A Mg(2+)-binding site is contributed by S14. Residues C95 and C129 each contribute to the [4Fe-4S] cluster site. 180 to 181 is a binding site for ATP; sequence NR.

Belongs to the NifH/BchL/ChlL family. As to quaternary structure, homodimer. Protochlorophyllide reductase is composed of three subunits; ChlL, ChlN and ChlB. The cofactor is [4Fe-4S] cluster.

The protein resides in the plastid. It is found in the chloroplast. It catalyses the reaction chlorophyllide a + oxidized 2[4Fe-4S]-[ferredoxin] + 2 ADP + 2 phosphate = protochlorophyllide a + reduced 2[4Fe-4S]-[ferredoxin] + 2 ATP + 2 H2O. The protein operates within porphyrin-containing compound metabolism; chlorophyll biosynthesis (light-independent). In terms of biological role, component of the dark-operative protochlorophyllide reductase (DPOR) that uses Mg-ATP and reduced ferredoxin to reduce ring D of protochlorophyllide (Pchlide) to form chlorophyllide a (Chlide). This reaction is light-independent. The L component serves as a unique electron donor to the NB-component of the complex, and binds Mg-ATP. The polypeptide is Light-independent protochlorophyllide reductase iron-sulfur ATP-binding protein (Tetradesmus obliquus (Green alga)).